The primary structure comprises 750 residues: (13E)-labda-7,13-dien-15-ol synthase (750 aa).

7 residues coordinate Mg(2+): aspartate 284, aspartate 286, aspartate 501, aspartate 505, asparagine 647, threonine 651, and glutamate 655. The DXDD motif motif lies at 284 to 287; sequence DIDD. Positions 501 to 505 match the DDXXD motif motif; sequence DDLAD.

This sequence belongs to the terpene synthase family. Mg(2+) serves as cofactor.

The enzyme catalyses geranylgeranyl diphosphate + H2O = (13E)-labda-7,13-dien-15-ol + diphosphate. It functions in the pathway secondary metabolite biosynthesis; terpenoid biosynthesis. Bifunctional diterpene synthase that directly generates the endocyclic double bond, as well as the hydroxyl group: produces an endocyclic double bond isomer of copalyl diphosphate (CPP), and carries out subsequent replacement of the diphosphate by a hydroxyl group to form (13E)-labda-7,13-dien-15-ol. This Selaginella moellendorffii (Spikemoss) protein is (13E)-labda-7,13-dien-15-ol synthase.